The sequence spans 244 residues: Lymphotoxin-beta (244 aa).

At 1 to 18 (MGALGLEGRGGRLQGRGS) the chain is on the cytoplasmic side. The helical; Signal-anchor for type II membrane protein transmembrane segment at 19 to 48 (LLLAVAGATSLVTLLLAVPITVLAVLALVP) threads the bilayer. The Extracellular segment spans residues 49–244 (QDQGGLVTET…KTFFGAVMVG (196 aa)). Residues 88–243 (PAAHLIGAPL…GKTFFGAVMV (156 aa)) enclose the THD domain. An N-linked (GlcNAc...) asparagine glycan is attached at Asn222.

Belongs to the tumor necrosis factor family. Heterotrimer of either two LTB and one LTA subunits or (less prevalent) two LTA and one LTB subunits.

The protein resides in the membrane. Cytokine that binds to LTBR/TNFRSF3. May play a specific role in immune response regulation. Provides the membrane anchor for the attachment of the heterotrimeric complex to the cell surface. This Pan troglodytes (Chimpanzee) protein is Lymphotoxin-beta (LTB).